The sequence spans 174 residues: Regenerating islet-derived protein 3-gamma (174 aa).

An N-terminal signal peptide occupies residues 1-26 (MLPRVALTTMSWMLLSSLMLLSQVQG). A propeptide spanning residues 27-37 (EDAKEDVPTSR) is cleaved from the precursor. 3 disulfide bridges follow: C40–C51, C68–C170, and C145–C162. Residues 47-171 (YGSYCYALFS…CISELPYVCK (125 aa)) enclose the C-type lectin domain. The segment at 103–118 (WIGLHDPTLGQEPNRG) is sufficient to activate EXTL3. H107 provides a ligand contact to Zn(2+). Positions 114-116 (EPN) match the EPN motif. The Zn(2+) site is built by E121 and H144.

Forms a hexameric membrane-permeabilizing oligomeric pore on membrane phospholipids. The hexamer is formed by three dimers related by helical symmetry. Forms filaments, filamentation traps pore complexes and limits damage to host cells. Interacts with EXTL3. Post-translationally, proteolytic processing by trypsin removes an inhibitory N-terminal propeptide and is essential for peptidoglycan binding and antibacterial activity. As to expression, expressed in injured skeletal muscles and sciatic nerve (at protein level). Expressed in the pancreas. Expression increases during the acute phase of pancreatitis.

It is found in the secreted. It localises to the cytoplasm. Its activity is regulated as follows. Lipopolysaccharide inhibits pore-forming activity, explaining why is bactericidal for Gram-positive but not Gram-negative bacteria. In terms of biological role, bactericidal C-type lectin which acts exclusively against Gram-positive bacteria and mediates bacterial killing by binding to surface-exposed carbohydrate moieties of peptidoglycan. Restricts bacterial colonization of the intestinal epithelial surface and consequently limits activation of adaptive immune responses by the microbiota. Functionally, acts as a hormone in response to different stimuli like anti-inflammatory signals, such as IL17A, or gut microbiome. Is secreted by different cell types to activate its receptor EXTL3 and induce cell specific signaling pathways. Induced by IL17A in keratinocytes, regulates keratinocyte proliferation and differentiation after skin injury. In parallel, inhibits skin inflammation through the inhibition of inflammatory cytokines such as IL6 and TNF. Induced by IL22 in lung epithelial cells, inhibits cytokine production and regulates allergic airway inflammation. Induced in small intestine by inulin-enriched diet and Lactobacillus gasseri enriched microbiome, plays a role in the improvement of gut barrier function, the regulation of energy balance and glucose levels. Modulates microbiota composition in duodenal contents. Produced by nociceptor in response to endotoxins, prevents endotoxic death by targeting kynurenine pathway in microglia. Its function is as follows. Has bacteriostatic activity. Has bactericidal activity against L.monocytogenes and methicillin-resistant S.aureus. This is Regenerating islet-derived protein 3-gamma from Rattus norvegicus (Rat).